A 109-amino-acid polypeptide reads, in one-letter code: Ribonuclease P protein component 2 (109 aa).

Belongs to the eukaryotic/archaeal RNase P protein component 2 family. As to quaternary structure, consists of a catalytic RNA component and at least 4-5 protein subunits.

It is found in the cytoplasm. The enzyme catalyses Endonucleolytic cleavage of RNA, removing 5'-extranucleotides from tRNA precursor.. In terms of biological role, part of ribonuclease P, a protein complex that generates mature tRNA molecules by cleaving their 5'-ends. The chain is Ribonuclease P protein component 2 from Archaeoglobus fulgidus (strain ATCC 49558 / DSM 4304 / JCM 9628 / NBRC 100126 / VC-16).